The following is a 211-amino-acid chain: Large ribosomal subunit protein uL3 (211 aa).

The protein belongs to the universal ribosomal protein uL3 family. In terms of assembly, part of the 50S ribosomal subunit. Forms a cluster with proteins L14 and L19.

Functionally, one of the primary rRNA binding proteins, it binds directly near the 3'-end of the 23S rRNA, where it nucleates assembly of the 50S subunit. The protein is Large ribosomal subunit protein uL3 of Geotalea daltonii (strain DSM 22248 / JCM 15807 / FRC-32) (Geobacter daltonii).